A 520-amino-acid chain; its full sequence is ATP-dependent RNA helicase CshA (520 aa).

The Q motif signature appears at threonine 2–glutamate 30. Residues isoleucine 33–isoleucine 203 form the Helicase ATP-binding domain. Alanine 46–threonine 53 is a binding site for ATP. The short motif at aspartate 151–aspartate 154 is the DEAD box element. Residues leucine 214–alanine 374 enclose the Helicase C-terminal domain. The span at lysine 428–leucine 439 shows a compositional bias: basic and acidic residues. Positions lysine 428–lysine 520 are disordered. Composition is skewed to gly residues over residues arginine 442–glycine 468 and serine 482–glycine 496.

The protein belongs to the DEAD box helicase family. CshA subfamily. Oligomerizes, may be a member of the RNA degradosome.

It is found in the cytoplasm. It carries out the reaction ATP + H2O = ADP + phosphate + H(+). Its function is as follows. DEAD-box RNA helicase possibly involved in RNA degradation. Unwinds dsRNA in both 5'- and 3'-directions, has RNA-dependent ATPase activity. Involved in cold tolerance, motility and alcohol tolerance. The chain is ATP-dependent RNA helicase CshA from Listeria monocytogenes serovar 1/2a (strain ATCC BAA-679 / EGD-e).